The primary structure comprises 378 residues: Ribosomal RNA large subunit methyltransferase G (378 aa).

The protein belongs to the methyltransferase superfamily. RlmG family.

Its subcellular location is the cytoplasm. The enzyme catalyses guanosine(1835) in 23S rRNA + S-adenosyl-L-methionine = N(2)-methylguanosine(1835) in 23S rRNA + S-adenosyl-L-homocysteine + H(+). Functionally, specifically methylates the guanine in position 1835 (m2G1835) of 23S rRNA. This chain is Ribosomal RNA large subunit methyltransferase G, found in Shewanella baltica (strain OS195).